The following is a 158-amino-acid chain: RNA pyrophosphohydrolase (158 aa).

The Nudix hydrolase domain maps to 6–150 (GYRLNVGIVL…KRDVYRKVMQ (145 aa)). Residues 39–60 (GGINIGETPEQAMYRELFEEIG) carry the Nudix box motif.

This sequence belongs to the Nudix hydrolase family. RppH subfamily. The cofactor is a divalent metal cation.

Functionally, accelerates the degradation of transcripts by removing pyrophosphate from the 5'-end of triphosphorylated RNA, leading to a more labile monophosphorylated state that can stimulate subsequent ribonuclease cleavage. The protein is RNA pyrophosphohydrolase of Blochmanniella pennsylvanica (strain BPEN).